A 397-amino-acid chain; its full sequence is Xylose isomerase (397 aa).

Catalysis depends on residues histidine 54 and aspartate 57. 7 residues coordinate Mg(2+): glutamate 181, glutamate 217, histidine 220, aspartate 245, aspartate 255, aspartate 257, and aspartate 293.

The protein belongs to the xylose isomerase family. In terms of assembly, homotetramer. Mg(2+) serves as cofactor.

It localises to the cytoplasm. It catalyses the reaction alpha-D-xylose = alpha-D-xylulofuranose. The sequence is that of Xylose isomerase from Clavibacter michiganensis subsp. michiganensis (strain NCPPB 382).